The chain runs to 253 residues: MTNETPFSKNAEMYRDEKVFAEGEDLGLMIKTAECRAEHRVLDIGAGAGHTALAFSPYVQECIGVDATKEMVEVASSFAQEKGVENVRFQQGTAESLPFPDDSFDIITCRYAAHHFSDVRKAVREVARVLKQDGRFLLVDHYAPEDPVLDEFVNHLNRLRDPSHVRESSLSEWQAMFSANQLAYQDIQKWNLPIQYDSWIKRGGTPADREKQIITHLNHASDEARDTFCITLNQNGQPISFCLKAILIQGIKR.

S-adenosyl-L-methionine contacts are provided by residues Gly-45, 66 to 67, 94 to 95, and Arg-110; these read DA and AE.

It belongs to the methyltransferase superfamily.

This is an uncharacterized protein from Bacillus subtilis (strain 168).